Consider the following 481-residue polypeptide: Palmitoyltransferase PFA4 (481 aa).

Residues 1 to 22 (MTNQDPDDGAYPSSQSDDDGIE) form a disordered region. The Cytoplasmic segment spans residues 1 to 66 (MTNQDPDDGA…APLTGRRRTP (66 aa)). The chain crosses the membrane as a helical span at residues 67-87 (LSWTEVIWVSLTLLLIAVLGY). Residues 88 to 108 (SSQLYVMLPYYEKTPSFSPQA) are Lumenal-facing. A helical membrane pass occupies residues 109-129 (LAAVLVPFNLGLLAIYYNYWL). At 130–223 (CVTTDAGSVP…LANCVGHFNH (94 aa)) the chain is on the cytoplasmic side. A DHHC domain is found at 181–231 (RYCKTCSAFKPPRSHHCKTCQRCVLRMDHHCPWLANCVGHFNHAHFIRFLF). The active-site S-palmitoyl cysteine intermediate is the Cys-211. The chain crosses the membrane as a helical span at residues 224 to 244 (AHFIRFLFYVDVTCLYHLIMI). Residues 245–265 (SCRVLDSFNSYTYWREPCARE) lie on the Lumenal side of the membrane. A helical membrane pass occupies residues 266–286 (LVWLVVNYALCIPVILLVGIF). The Cytoplasmic portion of the chain corresponds to 287-481 (SLYHFYCLAV…EVRPHTPWSV (195 aa)). The interval 370-481 (SQYRWPPKDP…EVRPHTPWSV (112 aa)) is disordered. Positions 418 to 431 (SSPSSSDSHSSLHL) are enriched in low complexity. 2 stretches are compositionally biased toward basic and acidic residues: residues 441 to 452 (LPHHFDPPHDPD) and 466 to 475 (RGSEGYEVRP).

The protein belongs to the DHHC palmitoyltransferase family. PFA4 subfamily.

It localises to the endoplasmic reticulum membrane. The catalysed reaction is L-cysteinyl-[protein] + hexadecanoyl-CoA = S-hexadecanoyl-L-cysteinyl-[protein] + CoA. In terms of biological role, mediates the reversible addition of palmitate to target proteins, thereby regulating their membrane association and biological function. The protein is Palmitoyltransferase PFA4 of Mycosarcoma maydis (Corn smut fungus).